Reading from the N-terminus, the 123-residue chain is Large ribosomal subunit protein uL14 (123 aa).

The protein belongs to the universal ribosomal protein uL14 family. In terms of assembly, part of the 50S ribosomal subunit. Forms a cluster with proteins L3 and L19. In the 70S ribosome, L14 and L19 interact and together make contacts with the 16S rRNA in bridges B5 and B8.

Functionally, binds to 23S rRNA. Forms part of two intersubunit bridges in the 70S ribosome. The chain is Large ribosomal subunit protein uL14 from Serratia proteamaculans (strain 568).